The primary structure comprises 364 residues: MFSHIHPDNYDAQLSKKQQDMAKLFSDFNLPAPDLYPSVPLNYRQRAEFRVWHEGDDLYYIMFDSKTKEKFRVDDFPVASELINNAMKALLATIKDQRELRFKLFQVDFLSTLSGELLISMLYHKPLEDNWQIEAEKLKAQLSTIAPVDIIGRAKKQKIIVDKDYVMESLNVGGKTYVYQQVENSFTQPNAGVNEQMLLWAQQATQNAGGDLIELYCGNGNFSIALAENFERVLGTEISKTSVRSAQINISENGIDNIDIVRMSSEEFSQAMNGERKFRRLEDFDLTTYNYDTVLVDPPRAGLDRDSVELVRRFNKIIYISCNPETLKDNLALLVETHQIDKFALFDQFPYTDHIETGVILTRK.

S-adenosyl-L-methionine is bound by residues Gln188, Tyr216, Asn221, Glu237, and Asp297. The active-site Nucleophile is Cys322. Catalysis depends on Glu356, which acts as the Proton acceptor.

The protein belongs to the class I-like SAM-binding methyltransferase superfamily. RNA M5U methyltransferase family. TrmA subfamily.

The enzyme catalyses uridine(54) in tRNA + S-adenosyl-L-methionine = 5-methyluridine(54) in tRNA + S-adenosyl-L-homocysteine + H(+). It carries out the reaction uridine(341) in tmRNA + S-adenosyl-L-methionine = 5-methyluridine(341) in tmRNA + S-adenosyl-L-homocysteine + H(+). In terms of biological role, dual-specificity methyltransferase that catalyzes the formation of 5-methyluridine at position 54 (m5U54) in all tRNAs, and that of position 341 (m5U341) in tmRNA (transfer-mRNA). The polypeptide is tRNA/tmRNA (uracil-C(5))-methyltransferase (Colwellia psychrerythraea (strain 34H / ATCC BAA-681) (Vibrio psychroerythus)).